The chain runs to 263 residues: 3-methyl-2-oxobutanoate hydroxymethyltransferase (263 aa).

Residues Asp45 and Asp84 each contribute to the Mg(2+) site. 3-methyl-2-oxobutanoate-binding positions include 45 to 46 (DS), Asp84, and Lys112. Mg(2+) is bound at residue Glu114. The active-site Proton acceptor is the Glu181.

This sequence belongs to the PanB family. As to quaternary structure, homodecamer; pentamer of dimers. It depends on Mg(2+) as a cofactor.

It is found in the cytoplasm. The catalysed reaction is 3-methyl-2-oxobutanoate + (6R)-5,10-methylene-5,6,7,8-tetrahydrofolate + H2O = 2-dehydropantoate + (6S)-5,6,7,8-tetrahydrofolate. The protein operates within cofactor biosynthesis; (R)-pantothenate biosynthesis; (R)-pantoate from 3-methyl-2-oxobutanoate: step 1/2. Its function is as follows. Catalyzes the reversible reaction in which hydroxymethyl group from 5,10-methylenetetrahydrofolate is transferred onto alpha-ketoisovalerate to form ketopantoate. The sequence is that of 3-methyl-2-oxobutanoate hydroxymethyltransferase from Buchnera aphidicola subsp. Schizaphis graminum (strain Sg).